The chain runs to 255 residues: Homeobox protein DLX-1 (255 aa).

Positions 1–14 (MTMTTMPESLNSPV) are enriched in polar residues. Disordered stretches follow at residues 1 to 38 (MTMTTMPESLNSPVSGKAVFMEFGPPNQQMSPSPMSHG) and 95 to 118 (SLAQSRLEDPGADSEKSTVVEGGE). Positions 25–36 (PPNQQMSPSPMS) are enriched in low complexity. Over residues 100–112 (RLEDPGADSEKST) the composition is skewed to basic and acidic residues. The homeobox DNA-binding region spans 128-187 (IRKPRTIYSSLQLQALNRRFQQTQYLALPERAELAASLGLTQTQVKIWFQNKRSKFKKLM). Residues 204–230 (ALSAGSPPVPPGWNPNSSSGKGSGGNA) form a disordered region.

This sequence belongs to the distal-less homeobox family. Interacts with SMAD4 (via homeobox DNA-binding domain). Interacts (via homeobox DNA-binding domain) with POU4F2; this interaction suppresses DLX1-mediated transcriptional activity in postnatal retina and enhances retinal ganglion cell (RGC) differentiation. Expressed in hematopoietic cell lines.

It localises to the nucleus. Its function is as follows. Plays a role as a transcriptional activator or repressor. Inhibits several cytokine signaling pathways, such as TGFB1, activin-A/INHBA and BMP4 by interfering with the transcriptional stimulatory activity of transcription factors, such as MSX2, FAST2, SMAD2 and SMAD3 during hematopoietic cell differentiation. Plays a role in terminal differentiation of interneurons, such as amacrine and bipolar cells in the developing retina. Likely to play a regulatory role in the development of the ventral forebrain. May play a role in craniofacial patterning and morphogenesis and may be involved in the early development of diencephalic subdivisions. This is Homeobox protein DLX-1 (DLX1) from Homo sapiens (Human).